The primary structure comprises 334 residues: Putative transport protein MTH_1211 (334 aa).

8 helical membrane-spanning segments follow: residues Ala-24 to Val-44, Val-60 to Thr-80, Ile-84 to Gly-104, Tyr-131 to Ser-151, Val-189 to Ala-209, Ala-220 to Ala-240, Ile-255 to Leu-275, and Met-289 to Val-309.

Belongs to the autoinducer-2 exporter (AI-2E) (TC 2.A.86) family.

The protein resides in the cell membrane. The polypeptide is Putative transport protein MTH_1211 (Methanothermobacter thermautotrophicus (strain ATCC 29096 / DSM 1053 / JCM 10044 / NBRC 100330 / Delta H) (Methanobacterium thermoautotrophicum)).